Reading from the N-terminus, the 659-residue chain is Exoribonuclease 2 (659 aa).

The RNB domain maps to 189-532; the sequence is RRDLTALHFV…NHRLIKACLA (344 aa). One can recognise an S1 motif domain in the interval 577–659; that stretch reads NPEFRAEVQD…ETRSLIGNLV (83 aa).

The protein belongs to the RNR ribonuclease family. RNase II subfamily.

It localises to the cytoplasm. It carries out the reaction Exonucleolytic cleavage in the 3'- to 5'-direction to yield nucleoside 5'-phosphates.. Its function is as follows. Involved in mRNA degradation. Hydrolyzes single-stranded polyribonucleotides processively in the 3' to 5' direction. The chain is Exoribonuclease 2 from Mannheimia succiniciproducens (strain KCTC 0769BP / MBEL55E).